Consider the following 319-residue polypeptide: tRNA pseudouridine synthase B (319 aa).

Asp-49 acts as the Nucleophile in catalysis.

Belongs to the pseudouridine synthase TruB family. Type 1 subfamily.

It catalyses the reaction uridine(55) in tRNA = pseudouridine(55) in tRNA. In terms of biological role, responsible for synthesis of pseudouridine from uracil-55 in the psi GC loop of transfer RNAs. This Bartonella henselae (strain ATCC 49882 / DSM 28221 / CCUG 30454 / Houston 1) (Rochalimaea henselae) protein is tRNA pseudouridine synthase B.